Reading from the N-terminus, the 364-residue chain is Transcription factor TGA4 (364 aa).

A disordered region spans residues 39-79; sequence PGSIIIPTNEKPDSLSEDTSHGTEGTPHKFDQEASTSRHPD. A compositionally biased stretch (basic and acidic residues) spans 48 to 79; sequence EKPDSLSEDTSHGTEGTPHKFDQEASTSRHPD. Residues 78 to 141 form the bZIP domain; that stretch reads PDKIQRRLAQ…NGVDTNALSF (64 aa). 2 coiled-coil regions span residues 79-127 and 257-277; these read DKIQ…RQQG and NLRQ…EKLQ. Positions 80–100 are basic motif; the sequence is KIQRRLAQNREAARKSRLRKK. The leucine-zipper stretch occupies residues 106-120; sequence LETSRLKLIHLEQEL. The region spanning 149–359 is the DOG1 domain; sequence IVAFEMEYGH…RALSSSWAAR (211 aa). A disulfide bridge connects residues cysteine 256 and cysteine 262.

Belongs to the bZIP family. As to quaternary structure, binds DNA as a dimer. Interaction with the Dof domain proteins OBP1, OBP2 or OBP3 enhances the binding to the ocs element. Interacts with RAP2-3/EPB, an ethylene-responsive element binding protein. The reduced form interacts with NPR1. In terms of tissue distribution, predominantly expressed in roots.

It is found in the nucleus. Its function is as follows. Transcriptional activator that binds specifically to the DNA sequence 5'-TGACG-3'. Recognizes ocs elements like the as-1 motif of the cauliflower mosaic virus 35S promoter. Binding to the as-1-like cis elements mediate auxin- and salicylic acid-inducible transcription. May be involved in the induction of the systemic acquired resistance (SAR) via its interaction with NPR1. Could also bind to the Hex-motif (5'-TGACGTGG-3') another cis-acting element found in plant histone promoters. This is Transcription factor TGA4 (TGA4) from Arabidopsis thaliana (Mouse-ear cress).